A 140-amino-acid polypeptide reads, in one-letter code: Ergosterol biosynthetic protein 28 homolog (140 aa).

Helical transmembrane passes span 4 to 24 (FLNVLRSWLVMVSIIAMGNTL), 52 to 72 (TFGIWTLLSSVIRCLCAIDIH), 79 to 99 (ITLWTFLLALGHFLSELFVFG), and 105 to 125 (VGVLAPLMVASFSILGMLVGL).

The protein belongs to the ERG28 family.

The protein localises to the endoplasmic reticulum membrane. The protein is Ergosterol biosynthetic protein 28 homolog of Mus musculus (Mouse).